Consider the following 273-residue polypeptide: Protein GMH1 (273 aa).

Positions 1–33 (MSYLPTYSNDLPAGPQGQRRRNNGNENDARQGY) are disordered. N-acetylserine is present on Ser2. The Cytoplasmic portion of the chain corresponds to 2-89 (SYLPTYSNDL…QTKNQWARDD (88 aa)). The helical transmembrane segment at 90–110 (PSFFIFQIALISLSSIIWSIY) threads the bilayer. Topologically, residues 111–134 (NSGFNNDSDMGALSIIGHFFKSLV) are lumenal. A helical membrane pass occupies residues 135-155 (MMVILDFFIFGFIMATIFYLL). Over 156–175 (LNRSHFKFKSSQNSVVEWAY) the chain is Cytoplasmic. The chain crosses the membrane as a helical span at residues 176–196 (CFDVHCNSFLIILLCLYFIQF). Topologically, residues 197–216 (LLLPIINLQNWISLLIGNSL) are lumenal. The helical transmembrane segment at 217 to 237 (YCFAIGHYFILTFYGYNQLPF) threads the bilayer. The Cytoplasmic segment spans residues 238 to 242 (LKNLN). Residues 243 to 263 (FILLPTLGLSIIYLISLFGID) form a helical membrane-spanning segment. The Lumenal portion of the chain corresponds to 264-273 (LSKKLSFYNY).

It belongs to the unc-50 family. In terms of assembly, interacts with GEA1 and GEA2.

Its subcellular location is the golgi apparatus membrane. The protein resides in the endoplasmic reticulum membrane. The sequence is that of Protein GMH1 (GMH1) from Saccharomyces cerevisiae (strain ATCC 204508 / S288c) (Baker's yeast).